The chain runs to 112 residues: Nucleoid-associated protein FTH_1374 (112 aa).

Residues 1-27 (MNFDMSKLMQQAQKMQEQMKKAQQERE) are disordered. The segment covering 17–27 (EQMKKAQQERE) has biased composition (basic and acidic residues).

It belongs to the YbaB/EbfC family. As to quaternary structure, homodimer.

It is found in the cytoplasm. It localises to the nucleoid. Functionally, binds to DNA and alters its conformation. May be involved in regulation of gene expression, nucleoid organization and DNA protection. The sequence is that of Nucleoid-associated protein FTH_1374 from Francisella tularensis subsp. holarctica (strain OSU18).